Reading from the N-terminus, the 512-residue chain is MATANGAVENGQPDRKPPALPRPIRNLEVKFTKIFINNEWHESKSGKKFATCNPSTREQICEVEEGDKPDVDKAVEAAQVAFQRGSPWRRLDALSRGRLLHQLADLVERDRATLAALETMDTGKPFLHAFFIDLEGCIRTLRYFAGWADKIQGKTIPTDDNVVCFTRHEPIGVCGAITPWNFPLLMLVWKLAPALCCGNTMVLKPAEQTPLTALYLGSLIKEAGFPPGVVNIVPGFGPTVGAAISSHPQINKIAFTGSTEVGKLVKEAASRSNLKRVTLELGGKNPCIVCADADLDLAVECAHQGVFFNQGQCCTAASRVFVEEQVYSEFVRRSVEYAKKRPVGDPFDVKTEQGPQIDQKQFDKILELIESGKKEGAKLECGGSAMEDKGLFIKPTVFSEVTDNMRIAKEEIFGPVQPILKFKSIEEVIKRANSTDYGLTAAVFTKNLDKALKLASALESGTVWINCYNALYAQAPFGGFKMSGNGRELGEYALAEYTEVKTVTIKLGDKNP.

The segment at 1-22 (MATANGAVENGQPDRKPPALPR) is disordered. Alanine 2 carries the N-acetylalanine modification. NAD(+) contacts are provided by residues lysine 204, glutamate 207, and 257–262 (GSTEVG). Glutamate 280 serves as the catalytic Proton acceptor. Cysteine 314 serves as the catalytic Nucleophile. NAD(+) contacts are provided by glutamine 361 and glutamate 411.

It belongs to the aldehyde dehydrogenase family. As to quaternary structure, homotetramer. As to expression, expressed at low levels in many tissues and at higher levels in salivary gland, stomach, and kidney.

It localises to the cytoplasm. It carries out the reaction all-trans-retinal + NAD(+) + H2O = all-trans-retinoate + NADH + 2 H(+). The catalysed reaction is retinal + NAD(+) + H2O = retinoate + NADH + 2 H(+). The enzyme catalyses all-trans-13,14-dihydroretinal + NAD(+) + H2O = all-trans-13,14-dihydroretinoate + NADH + 2 H(+). It functions in the pathway cofactor metabolism; retinol metabolism. Functionally, catalyzes the NAD-dependent oxidation of aldehyde substrates, such as all-trans-retinal and all-trans-13,14-dihydroretinal, to their corresponding carboxylic acids, all-trans-retinoate and all-trans-13,14-dihydroretinoate, respectively. High specificity for all-trans-retinal as substrate, can also accept acetaldehyde as substrate in vitro but with lower affinity. Required for the biosynthesis of normal levels of retinoate in the embryonic ocular and nasal regions; a critical lipid in the embryonic development of the eye and the nasal region. In Homo sapiens (Human), this protein is Retinaldehyde dehydrogenase 3 (ALDH1A3).